We begin with the raw amino-acid sequence, 354 residues long: Coiled-coil domain-containing protein 86 (354 aa).

A disordered region spans residues 1 to 354; that stretch reads MDTPLRRSRR…QPPQRPATKV (354 aa). A phosphoserine mark is found at serine 18 and serine 24. The span at 31–44 shows a compositional bias: basic and acidic residues; it reads VLVEFESNPKETGE. Phosphoserine occurs at positions 47 and 53. The span at 49–58 shows a compositional bias: low complexity; it reads PGLGSPSRQP. Threonine 60 is subject to Phosphothreonine. Residues serine 61, serine 64, serine 75, serine 86, serine 105, serine 108, serine 123, and serine 183 each carry the phosphoserine modification. Polar residues predominate over residues 97 to 107; the sequence is FPQNQPESSPE. Positions 199–211 are enriched in basic and acidic residues; it reads PAREGPAPKKREG. A phosphoserine mark is found at serine 212 and serine 213. The span at 232–248 shows a compositional bias: basic residues; that stretch reads GKPKSGRVWKDRSKKRF. Composition is skewed to basic and acidic residues over residues 267–289 and 297–311; these read DRQERKLAKDFARHLEEEKERRR and AENLRRRLENERKAE. A coiled-coil region spans residues 274–317; that stretch reads AKDFARHLEEEKERRRQEKKKRRAENLRRRLENERKAEIVQVIR. Positions 320 to 330 are enriched in basic residues; that stretch reads AKLKRAKKKQL. Arginine 336 bears the Citrulline mark.

Post-translationally, citrullinated by PADI4.

It is found in the nucleus. The protein resides in the chromosome. The protein localises to the nucleolus. Its function is as follows. Required for proper chromosome segregation during mitosis and error-free mitotic progression. The protein is Coiled-coil domain-containing protein 86 of Bos taurus (Bovine).